Consider the following 408-residue polypeptide: MLTPVNLLDFDVDGLVTWFAERGEKPFRARQVMRWMHRFGETDFGNMTDVAKSLRAKLAEEACIRAPRAIRDAVSVDGTRKWLLDVGSANAVEAVFIPETNRGTLCISSQAGCALDCAFCSTGKQGFNRNLSAAEIIGQLWLANRLLGGSASPAGSKDGDGGPDHASRATKLDHRAADAKGVQSDSWRSSDPEEDHNGRVISNVVMMGMGEPLANFDNVVTALRLMLDDHAYGLSRRRVTVSTSGIVPAMDRLRDECPVALAVSLHAPDDALRDRLVPINRKYPLRELMAACQRYLERAPRDFVTFEYVMLDDVNDSDAHARALVELVRDVPCKFNLIPFNPFPNSGFDRSPAERIRRFAAILIDAGIVTTTRKTRGDDVNAACGQLAGQVQDRSRRTVRLVKPMEGR.

Glu93 serves as the catalytic Proton acceptor. A Radical SAM core domain is found at 99-379; sequence ETNRGTLCIS…TTTRKTRGDD (281 aa). A disulfide bridge connects residues Cys106 and Cys384. Residues Cys113, Cys117, and Cys120 each coordinate [4Fe-4S] cluster. Positions 152 to 196 are disordered; that stretch reads SPAGSKDGDGGPDHASRATKLDHRAADAKGVQSDSWRSSDPEEDH. Basic and acidic residues predominate over residues 157–178; sequence KDGDGGPDHASRATKLDHRAAD. Residues 210–211, Ser242, 264–266, and Asn341 contribute to the S-adenosyl-L-methionine site; these read GE and SLH. Catalysis depends on Cys384, which acts as the S-methylcysteine intermediate.

Belongs to the radical SAM superfamily. RlmN family. Requires [4Fe-4S] cluster as cofactor.

It is found in the cytoplasm. The catalysed reaction is adenosine(2503) in 23S rRNA + 2 reduced [2Fe-2S]-[ferredoxin] + 2 S-adenosyl-L-methionine = 2-methyladenosine(2503) in 23S rRNA + 5'-deoxyadenosine + L-methionine + 2 oxidized [2Fe-2S]-[ferredoxin] + S-adenosyl-L-homocysteine. It carries out the reaction adenosine(37) in tRNA + 2 reduced [2Fe-2S]-[ferredoxin] + 2 S-adenosyl-L-methionine = 2-methyladenosine(37) in tRNA + 5'-deoxyadenosine + L-methionine + 2 oxidized [2Fe-2S]-[ferredoxin] + S-adenosyl-L-homocysteine. Its function is as follows. Specifically methylates position 2 of adenine 2503 in 23S rRNA and position 2 of adenine 37 in tRNAs. m2A2503 modification seems to play a crucial role in the proofreading step occurring at the peptidyl transferase center and thus would serve to optimize ribosomal fidelity. This is Dual-specificity RNA methyltransferase RlmN from Aromatoleum aromaticum (strain DSM 19018 / LMG 30748 / EbN1) (Azoarcus sp. (strain EbN1)).